The following is a 571-amino-acid chain: Sulfite reductase [NADPH] hemoprotein beta-component (571 aa).

[4Fe-4S] cluster-binding residues include C435, C441, C480, and C484. C484 serves as a coordination point for siroheme.

Belongs to the nitrite and sulfite reductase 4Fe-4S domain family. As to quaternary structure, alpha(8)-beta(8). The alpha component is a flavoprotein, the beta component is a hemoprotein. It depends on siroheme as a cofactor. The cofactor is [4Fe-4S] cluster.

It carries out the reaction hydrogen sulfide + 3 NADP(+) + 3 H2O = sulfite + 3 NADPH + 4 H(+). Its pathway is sulfur metabolism; hydrogen sulfide biosynthesis; hydrogen sulfide from sulfite (NADPH route): step 1/1. Component of the sulfite reductase complex that catalyzes the 6-electron reduction of sulfite to sulfide. This is one of several activities required for the biosynthesis of L-cysteine from sulfate. In Serratia proteamaculans (strain 568), this protein is Sulfite reductase [NADPH] hemoprotein beta-component.